A 317-amino-acid polypeptide reads, in one-letter code: Aspartate carbamoyltransferase catalytic subunit (317 aa).

Residues R66 and T67 each coordinate carbamoyl phosphate. K94 lines the L-aspartate pocket. Carbamoyl phosphate contacts are provided by R116, H144, and Q147. L-aspartate-binding residues include R177 and R231. Carbamoyl phosphate-binding residues include G272 and P273.

It belongs to the aspartate/ornithine carbamoyltransferase superfamily. ATCase family. In terms of assembly, heterododecamer (2C3:3R2) of six catalytic PyrB chains organized as two trimers (C3), and six regulatory PyrI chains organized as three dimers (R2).

It carries out the reaction carbamoyl phosphate + L-aspartate = N-carbamoyl-L-aspartate + phosphate + H(+). The protein operates within pyrimidine metabolism; UMP biosynthesis via de novo pathway; (S)-dihydroorotate from bicarbonate: step 2/3. In terms of biological role, catalyzes the condensation of carbamoyl phosphate and aspartate to form carbamoyl aspartate and inorganic phosphate, the committed step in the de novo pyrimidine nucleotide biosynthesis pathway. The sequence is that of Aspartate carbamoyltransferase catalytic subunit from Nitrobacter winogradskyi (strain ATCC 25391 / DSM 10237 / CIP 104748 / NCIMB 11846 / Nb-255).